The sequence spans 278 residues: 4-deoxy-L-threo-5-hexosulose-uronate ketol-isomerase (278 aa).

Residues H196, H198, E203, and H245 each contribute to the Zn(2+) site.

The protein belongs to the KduI family. In terms of assembly, homohexamer. The cofactor is Zn(2+).

It catalyses the reaction 5-dehydro-4-deoxy-D-glucuronate = 3-deoxy-D-glycero-2,5-hexodiulosonate. The protein operates within glycan metabolism; pectin degradation; 2-dehydro-3-deoxy-D-gluconate from pectin: step 4/5. Functionally, catalyzes the isomerization of 5-dehydro-4-deoxy-D-glucuronate to 3-deoxy-D-glycero-2,5-hexodiulosonate. This chain is 4-deoxy-L-threo-5-hexosulose-uronate ketol-isomerase, found in Escherichia coli (strain 55989 / EAEC).